The following is a 484-amino-acid chain: RNA polymerase sigma-54 factor 1 (484 aa).

The H-T-H motif DNA-binding region spans 355–374 (NLKAVAEAIQMHESTVSRVT). The RPON box motif lies at 444-452 (ARRTVAKYR). The interval 464 to 484 (RRDNMWSTMNSRASGGTGLDK) is disordered. Polar residues predominate over residues 468 to 477 (MWSTMNSRAS).

This sequence belongs to the sigma-54 factor family.

In terms of biological role, sigma factors are initiation factors that promote the attachment of RNA polymerase to specific initiation sites and are then released. This sigma factor is responsible for the expression of the nitrogen fixation genes. In Bradyrhizobium diazoefficiens (strain JCM 10833 / BCRC 13528 / IAM 13628 / NBRC 14792 / USDA 110), this protein is RNA polymerase sigma-54 factor 1 (rpoN1).